The primary structure comprises 337 residues: Movement protein (337 aa).

Positions 1–11 (MAGLWRSNSTL) are enriched in polar residues. Disordered regions lie at residues 1–24 (MAGL…QTET) and 273–337 (SVVR…VRQT).

The protein localises to the host cell junction. Its subcellular location is the host plasmodesma. Its function is as follows. Transports viral genome to neighboring plant cells directly through plasmosdesmata, without any budding. The movement protein allows efficient cell to cell propagation, by bypassing the host cell wall barrier. Acts by forming a tubular structure at the host plasmodesmata, enlarging it enough to allow free passage of virion capsids. This chain is Movement protein, found in Olive latent virus 2 (isolate Italy) (OLV-2).